The primary structure comprises 275 residues: Thiazole synthase (275 aa).

Lysine 108 serves as the catalytic Schiff-base intermediate with DXP. 1-deoxy-D-xylulose 5-phosphate is bound by residues glycine 169, alanine 196–glycine 197, and asparagine 218–threonine 219.

It belongs to the ThiG family. As to quaternary structure, homotetramer. Forms heterodimers with either ThiH or ThiS.

Its subcellular location is the cytoplasm. It carries out the reaction [ThiS sulfur-carrier protein]-C-terminal-Gly-aminoethanethioate + 2-iminoacetate + 1-deoxy-D-xylulose 5-phosphate = [ThiS sulfur-carrier protein]-C-terminal Gly-Gly + 2-[(2R,5Z)-2-carboxy-4-methylthiazol-5(2H)-ylidene]ethyl phosphate + 2 H2O + H(+). It functions in the pathway cofactor biosynthesis; thiamine diphosphate biosynthesis. Functionally, catalyzes the rearrangement of 1-deoxy-D-xylulose 5-phosphate (DXP) to produce the thiazole phosphate moiety of thiamine. Sulfur is provided by the thiocarboxylate moiety of the carrier protein ThiS. In vitro, sulfur can be provided by H(2)S. The chain is Thiazole synthase from Ralstonia pickettii (strain 12J).